A 372-amino-acid chain; its full sequence is Chaperone protein DnaJ (372 aa).

One can recognise a J domain in the interval 5–70 (DYYDVLGVER…QKRANYDQYG (66 aa)). Residues 130-208 (GTTKDIQINT…CHGDGRVHKK (79 aa)) form a CR-type zinc finger. Zn(2+) is bound by residues C143, C146, C160, C163, C182, C185, C196, and C199. 4 CXXCXGXG motif repeats span residues 143–150 (CDSCDGSG), 160–167 (CSTCHGAG), 182–189 (CPSCHGSG), and 196–203 (CKSCHGDG).

It belongs to the DnaJ family. Homodimer. Zn(2+) is required as a cofactor.

The protein localises to the cytoplasm. In terms of biological role, participates actively in the response to hyperosmotic and heat shock by preventing the aggregation of stress-denatured proteins and by disaggregating proteins, also in an autonomous, DnaK-independent fashion. Unfolded proteins bind initially to DnaJ; upon interaction with the DnaJ-bound protein, DnaK hydrolyzes its bound ATP, resulting in the formation of a stable complex. GrpE releases ADP from DnaK; ATP binding to DnaK triggers the release of the substrate protein, thus completing the reaction cycle. Several rounds of ATP-dependent interactions between DnaJ, DnaK and GrpE are required for fully efficient folding. Also involved, together with DnaK and GrpE, in the DNA replication of plasmids through activation of initiation proteins. The chain is Chaperone protein DnaJ from Pasteurella multocida (strain Pm70).